The following is a 438-amino-acid chain: tRNA(Ile)-lysidine synthase (438 aa).

27–32 (SGGVDS) lines the ATP pocket.

Belongs to the tRNA(Ile)-lysidine synthase family.

It localises to the cytoplasm. It carries out the reaction cytidine(34) in tRNA(Ile2) + L-lysine + ATP = lysidine(34) in tRNA(Ile2) + AMP + diphosphate + H(+). Its function is as follows. Ligates lysine onto the cytidine present at position 34 of the AUA codon-specific tRNA(Ile) that contains the anticodon CAU, in an ATP-dependent manner. Cytidine is converted to lysidine, thus changing the amino acid specificity of the tRNA from methionine to isoleucine. In Vibrio parahaemolyticus serotype O3:K6 (strain RIMD 2210633), this protein is tRNA(Ile)-lysidine synthase.